The following is a 106-amino-acid chain: Small ribosomal subunit protein uS10 (106 aa).

Belongs to the universal ribosomal protein uS10 family. In terms of assembly, part of the 30S ribosomal subunit.

Functionally, involved in the binding of tRNA to the ribosomes. The protein is Small ribosomal subunit protein uS10 of Wolbachia pipientis subsp. Culex pipiens (strain wPip).